The chain runs to 450 residues: Methionine aminopeptidase 2 (450 aa).

The interval 1–99 (MAVQAPEVDK…LFPNSQYPEG (99 aa)) is disordered. A compositionally biased stretch (acidic residues) spans 33 to 49 (GDEDAENEESDEDDDQG). Residues 60-75 (KKKRKRKPKKKKKKGV) show a composition bias toward basic residues. His-200 is a binding site for substrate. The a divalent metal cation site is built by Asp-220, Asp-231, and His-300. Position 308 (His-308) interacts with substrate. Residues Glu-336 and Glu-431 each contribute to the a divalent metal cation site.

The protein belongs to the peptidase M24A family. Methionine aminopeptidase eukaryotic type 2 subfamily. Co(2+) is required as a cofactor. The cofactor is Zn(2+). It depends on Mn(2+) as a cofactor. Requires Fe(2+) as cofactor.

It is found in the cytoplasm. It carries out the reaction Release of N-terminal amino acids, preferentially methionine, from peptides and arylamides.. Its function is as follows. Cotranslationally removes the N-terminal methionine from nascent proteins. The N-terminal methionine is often cleaved when the second residue in the primary sequence is small and uncharged (Met-Ala-, Cys, Gly, Pro, Ser, Thr, or Val). This Uncinocarpus reesii (strain UAMH 1704) protein is Methionine aminopeptidase 2.